The primary structure comprises 1403 residues: Sushi, nidogen and EGF-like domain-containing protein 1 (1403 aa).

The signal sequence occupies residues 1-24 (MRLGAAWALLLAAALGLGTRGVRA). Residues 103-258 (AFWADVDNRR…GRWAFRIDDA (156 aa)) enclose the NIDO domain. EGF-like domains follow at residues 268–309 (TTSV…RRCH), 311–347 (DVNE…PTCE), and 349–385 (AQSP…ATCE). Disulfide bonds link cysteine 272/cysteine 284, cysteine 278/cysteine 297, cysteine 299/cysteine 308, cysteine 315/cysteine 326, cysteine 320/cysteine 335, cysteine 337/cysteine 346, cysteine 353/cysteine 364, cysteine 358/cysteine 373, cysteine 375/cysteine 384, cysteine 391/cysteine 402, cysteine 396/cysteine 411, cysteine 413/cysteine 422, cysteine 433/cysteine 444, cysteine 438/cysteine 453, cysteine 455/cysteine 464, cysteine 472/cysteine 480, cysteine 474/cysteine 488, and cysteine 490/cysteine 499. Residue asparagine 292 is glycosylated (N-linked (GlcNAc...) asparagine). The 37-residue stretch at 387 to 423 (DVDECSSDPCQNGGSCVDLVGNYSCICVEPFEGPQCE) folds into the EGF-like 4; calcium-binding domain. N-linked (GlcNAc...) asparagine glycosylation occurs at asparagine 408. 2 EGF-like domains span residues 429 to 465 (VPSP…LDCR) and 468 to 500 (ILND…LLCE). A glycan (N-linked (GlcNAc...) asparagine) is linked at asparagine 484. Asparagine 536 carries an N-linked (GlcNAc...) asparagine glycan. EGF-like domains lie at 541–577 (LPSP…RHCE), 580–616 (RPHL…RHCE), 619–655 (KPDS…RHCE), and 657–693 (APSP…HRCQ). 26 disulfide bridges follow: cysteine 545-cysteine 556, cysteine 550-cysteine 565, cysteine 567-cysteine 576, cysteine 584-cysteine 595, cysteine 589-cysteine 604, cysteine 606-cysteine 615, cysteine 623-cysteine 634, cysteine 628-cysteine 643, cysteine 645-cysteine 654, cysteine 661-cysteine 672, cysteine 666-cysteine 681, cysteine 683-cysteine 692, cysteine 698-cysteine 739, cysteine 724-cysteine 751, cysteine 757-cysteine 768, cysteine 762-cysteine 777, cysteine 779-cysteine 788, cysteine 795-cysteine 806, cysteine 800-cysteine 815, cysteine 817-cysteine 826, cysteine 833-cysteine 844, cysteine 838-cysteine 853, cysteine 855-cysteine 864, cysteine 871-cysteine 882, cysteine 876-cysteine 891, and cysteine 893-cysteine 902. A Sushi domain is found at 696–753 (VDCGHPEEVEHATMRFNGTHVGSVALYTCEPGFSLSALSHIRVCQPQGVWSQPPQCIE). N-linked (GlcNAc...) asparagine glycosylation is present at asparagine 712. Residues 753-789 (EVDECRSQPCLHGGSCQDLIADYQCLCSPGYEGVHCE) form the EGF-like 11; calcium-binding domain. Positions 791–827 (ETDECQAQPCRNGGSCRDLPRAFICQCPEGFVGIHCE) constitute an EGF-like 12; calcium-binding domain. 2 EGF-like domains span residues 829-865 (EVDA…YNCE) and 867-903 (VSDP…KDCT). N-linked (GlcNAc...) asparagine glycosylation occurs at asparagine 886. Fibronectin type-III domains lie at 908–1006 (PPTA…TRPR), 1007–1105 (PIED…TRPL), and 1106–1200 (PPAN…SPRD). Asparagine 977, asparagine 1015, asparagine 1109, asparagine 1139, and asparagine 1298 each carry an N-linked (GlcNAc...) asparagine glycan. The 37-residue stretch at 1306–1342 (TPGSCSEDACQNGGTCVPGADAHSCDCRPGFKGRHCE) folds into the EGF-like 15 domain. 3 disulfide bridges follow: cysteine 1310-cysteine 1321, cysteine 1315-cysteine 1330, and cysteine 1332-cysteine 1341.

Phosphorylated on serine and threonine residues. In terms of processing, N-glycosylated. In terms of tissue distribution, expressed in lung.

It is found in the secreted. The protein resides in the extracellular space. It localises to the extracellular matrix. The chain is Sushi, nidogen and EGF-like domain-containing protein 1 from Mus musculus (Mouse).